Here is a 240-residue protein sequence, read N- to C-terminus: 45 kDa antigen (240 aa).

Fibronectin type-III domains are found at residues 1-109 and 110-210; these read EFPD…FHTL and ANGT…KSGH.

This is 45 kDa antigen from Taenia ovis (Sheep tapeworm).